A 648-amino-acid chain; its full sequence is DNA gyrase subunit B (648 aa).

Residues 432–546 (RELFIVEGNS…YGFVYLAQPP (115 aa)) form the Toprim domain. Mg(2+) is bound by residues Glu438, Asp511, and Asp513.

Belongs to the type II topoisomerase GyrB family. Heterotetramer, composed of two GyrA and two GyrB chains. In the heterotetramer, GyrA contains the active site tyrosine that forms a transient covalent intermediate with DNA, while GyrB binds cofactors and catalyzes ATP hydrolysis. It depends on Mg(2+) as a cofactor. Mn(2+) serves as cofactor. Ca(2+) is required as a cofactor.

The protein resides in the cytoplasm. It carries out the reaction ATP-dependent breakage, passage and rejoining of double-stranded DNA.. Its function is as follows. A type II topoisomerase that negatively supercoils closed circular double-stranded (ds) DNA in an ATP-dependent manner to modulate DNA topology and maintain chromosomes in an underwound state. Negative supercoiling favors strand separation, and DNA replication, transcription, recombination and repair, all of which involve strand separation. Also able to catalyze the interconversion of other topological isomers of dsDNA rings, including catenanes and knotted rings. Type II topoisomerases break and join 2 DNA strands simultaneously in an ATP-dependent manner. The protein is DNA gyrase subunit B of Metamycoplasma hominis (strain ATCC 23114 / DSM 25592 / NBRC 14850 / NCTC 10111 / PG21) (Mycoplasma hominis).